The primary structure comprises 363 residues: Flagellar P-ring protein (363 aa).

The first 20 residues, 1 to 20, serve as a signal peptide directing secretion; sequence MKYKLVLAVAVLVFSLPSQA.

It belongs to the FlgI family. The basal body constitutes a major portion of the flagellar organelle and consists of four rings (L,P,S, and M) mounted on a central rod.

The protein resides in the periplasm. Its subcellular location is the bacterial flagellum basal body. Functionally, assembles around the rod to form the L-ring and probably protects the motor/basal body from shearing forces during rotation. In Shewanella baltica (strain OS223), this protein is Flagellar P-ring protein.